Consider the following 222-residue polypeptide: Ribosomal RNA large subunit methyltransferase E (222 aa).

The S-adenosyl-L-methionine site is built by glycine 64, tryptophan 66, aspartate 92, aspartate 108, and aspartate 133. Residue lysine 173 is the Proton acceptor of the active site.

This sequence belongs to the class I-like SAM-binding methyltransferase superfamily. RNA methyltransferase RlmE family.

It localises to the cytoplasm. The enzyme catalyses uridine(2552) in 23S rRNA + S-adenosyl-L-methionine = 2'-O-methyluridine(2552) in 23S rRNA + S-adenosyl-L-homocysteine + H(+). Its function is as follows. Specifically methylates the uridine in position 2552 of 23S rRNA at the 2'-O position of the ribose in the fully assembled 50S ribosomal subunit. The protein is Ribosomal RNA large subunit methyltransferase E of Variovorax paradoxus (strain S110).